Consider the following 235-residue polypeptide: Phosphoribosylaminoimidazole-succinocarboxamide synthase (235 aa).

This sequence belongs to the SAICAR synthetase family.

It carries out the reaction 5-amino-1-(5-phospho-D-ribosyl)imidazole-4-carboxylate + L-aspartate + ATP = (2S)-2-[5-amino-1-(5-phospho-beta-D-ribosyl)imidazole-4-carboxamido]succinate + ADP + phosphate + 2 H(+). The protein operates within purine metabolism; IMP biosynthesis via de novo pathway; 5-amino-1-(5-phospho-D-ribosyl)imidazole-4-carboxamide from 5-amino-1-(5-phospho-D-ribosyl)imidazole-4-carboxylate: step 1/2. This is Phosphoribosylaminoimidazole-succinocarboxamide synthase from Caldanaerobacter subterraneus subsp. tengcongensis (strain DSM 15242 / JCM 11007 / NBRC 100824 / MB4) (Thermoanaerobacter tengcongensis).